Here is a 535-residue protein sequence, read N- to C-terminus: Protein PyrBI (535 aa).

The tract at residues 1–341 is aspartate carbamoyltransferase; that stretch reads MENKFMGRSL…MIAGKIGDDY (341 aa). Residues 342-370 form a linker region; sequence KGPEPKSCERVEDEDYIVEVPINNSKESK. The aspartate carbamoyltransferase regulatory region stretch occupies residues 371–535; that stretch reads VETFSEGVRP…FKEIWGEKKN (165 aa). Zn(2+) is bound by residues C488, C493, C517, and C520.

In the N-terminal section; belongs to the aspartate/ornithine carbamoyltransferase superfamily. ATCase family. The protein in the C-terminal section; belongs to the PyrI family.

It carries out the reaction carbamoyl phosphate + L-aspartate = N-carbamoyl-L-aspartate + phosphate + H(+). It functions in the pathway pyrimidine metabolism; UMP biosynthesis via de novo pathway; (S)-dihydroorotate from bicarbonate: step 2/3. The sequence is that of Protein PyrBI (pyrBI) from Treponema denticola (strain ATCC 35405 / DSM 14222 / CIP 103919 / JCM 8153 / KCTC 15104).